Reading from the N-terminus, the 616-residue chain is Protein phosphatase EYA4 (616 aa).

M1 bears the N-acetylmethionine mark. Disordered stretches follow at residues M1 to N66, S186 to T211, and A277 to L345. Glycyl lysine isopeptide (Lys-Gly) (interchain with G-Cter in SUMO2) cross-links involve residues K14 and K52. A compositionally biased stretch (low complexity) spans S56–N66. A compositionally biased stretch (polar residues) spans A277 to T311. Position 338 is a phosphoserine (S338). Residue D352 is the Nucleophile of the active site. Residues D352, D354, and D580 each coordinate Mg(2+). D354 (proton donor) is an active-site residue.

The protein belongs to the HAD-like hydrolase superfamily. EYA family. In terms of assembly, interacts with SIX3; translocates EYA4 from the cytoplasm to the nucleus and promotes activation of their target genes. Mg(2+) is required as a cofactor. As to expression, in the embryo, expressed mainly in the craniofacial mesenchyme, dermamyotome and limb.

The protein localises to the cytoplasm. The protein resides in the nucleus. It carries out the reaction O-phospho-L-tyrosyl-[protein] + H2O = L-tyrosyl-[protein] + phosphate. Functionally, tyrosine phosphatase that specifically dephosphorylates 'Tyr-142' of histone H2AX (H2AXY142ph). 'Tyr-142' phosphorylation of histone H2AX plays a central role in DNA repair and acts as a mark that distinguishes between apoptotic and repair responses to genotoxic stress. Promotes efficient DNA repair by dephosphorylating H2AX, promoting the recruitment of DNA repair complexes containing MDC1. Its function as histone phosphatase probably explains its role in transcription regulation during organogenesis. May be involved in development of the eye. This is Protein phosphatase EYA4 (Eya4) from Mus musculus (Mouse).